Consider the following 206-residue polypeptide: Holliday junction branch migration complex subunit RuvA (206 aa).

The interval Met-1–Pro-62 is domain I. The domain II stretch occupies residues Asn-63–Ser-141. A flexible linker region spans residues Thr-142–His-152. The tract at residues Pro-153–Lys-206 is domain III.

It belongs to the RuvA family. As to quaternary structure, homotetramer. Forms an RuvA(8)-RuvB(12)-Holliday junction (HJ) complex. HJ DNA is sandwiched between 2 RuvA tetramers; dsDNA enters through RuvA and exits via RuvB. An RuvB hexamer assembles on each DNA strand where it exits the tetramer. Each RuvB hexamer is contacted by two RuvA subunits (via domain III) on 2 adjacent RuvB subunits; this complex drives branch migration. In the full resolvosome a probable DNA-RuvA(4)-RuvB(12)-RuvC(2) complex forms which resolves the HJ.

The protein resides in the cytoplasm. Functionally, the RuvA-RuvB-RuvC complex processes Holliday junction (HJ) DNA during genetic recombination and DNA repair, while the RuvA-RuvB complex plays an important role in the rescue of blocked DNA replication forks via replication fork reversal (RFR). RuvA specifically binds to HJ cruciform DNA, conferring on it an open structure. The RuvB hexamer acts as an ATP-dependent pump, pulling dsDNA into and through the RuvAB complex. HJ branch migration allows RuvC to scan DNA until it finds its consensus sequence, where it cleaves and resolves the cruciform DNA. This chain is Holliday junction branch migration complex subunit RuvA, found in Lysinibacillus sphaericus (strain C3-41).